Here is a 282-residue protein sequence, read N- to C-terminus: Transcription factor MYB20 (282 aa).

HTH myb-type domains lie at 9–61 (KVGL…TNYL) and 62–116 (RPDL…KKKL). DNA-binding regions (H-T-H motif) lie at residues 37 to 61 (WRAVPKLSGLLRCGKSCRLRWTNYL) and 89 to 112 (WSKIASHLPGRTDNEIKNHWNTHI).

Expressed in chalaza of mature seeds, cotyledons, rosette leaves, cauline leaves, veins of stems, mature siliques, sepals and styles. Expressed at low levels in roots.

The protein localises to the nucleus. Functionally, transcription factor that acts as a positive regulator of abscisic acid (ABA) signaling in response to salt stress. Acts as a negative regulator ABI1, ABI2 and PP2CA, which are protein phosphatases 2C acting as negative regulator of ABA signaling. Binds to the DNA specific sequence and core element 5'-ACGT-3' found in the promoters of ABI1 and PP2CA to negatively regulate their expression during ABA-dependent salt stress response. This is Transcription factor MYB20 from Arabidopsis thaliana (Mouse-ear cress).